A 169-amino-acid polypeptide reads, in one-letter code: UPF0303 protein BMEI0598 (169 aa).

The protein belongs to the UPF0303 family.

This chain is UPF0303 protein BMEI0598, found in Brucella melitensis biotype 1 (strain ATCC 23456 / CCUG 17765 / NCTC 10094 / 16M).